The chain runs to 122 residues: Small ribosomal subunit protein uS12cz/uS12cy (122 aa).

It belongs to the universal ribosomal protein uS12 family. In terms of assembly, part of the 30S ribosomal subunit.

The protein resides in the plastid. The protein localises to the chloroplast. With S4 and S5 plays an important role in translational accuracy. Located at the interface of the 30S and 50S subunits. This Triticum aestivum (Wheat) protein is Small ribosomal subunit protein uS12cz/uS12cy (rps12-A).